A 350-amino-acid polypeptide reads, in one-letter code: Flap endonuclease 1 (350 aa).

Residues 1 to 102 (MGVNLKDLIP…KEIEKRRKIR (102 aa)) are N-domain. Mg(2+)-binding residues include D31, D84, E156, E158, D177, D179, and D240. An I-domain region spans residues 120 to 262 (AARRYAMMSA…KALQLVKAYK (143 aa)). The segment at 341–349 (KQLGLEAWF) is interaction with PCNA.

It belongs to the XPG/RAD2 endonuclease family. FEN1 subfamily. In terms of assembly, interacts with PCNA. PCNA stimulates the nuclease activity without altering cleavage specificity. It depends on Mg(2+) as a cofactor.

Functionally, structure-specific nuclease with 5'-flap endonuclease and 5'-3' exonuclease activities involved in DNA replication and repair. During DNA replication, cleaves the 5'-overhanging flap structure that is generated by displacement synthesis when DNA polymerase encounters the 5'-end of a downstream Okazaki fragment. Binds the unpaired 3'-DNA end and kinks the DNA to facilitate 5' cleavage specificity. Cleaves one nucleotide into the double-stranded DNA from the junction in flap DNA, leaving a nick for ligation. Also involved in the base excision repair (BER) pathway. Acts as a genome stabilization factor that prevents flaps from equilibrating into structures that lead to duplications and deletions. Also possesses 5'-3' exonuclease activity on nicked or gapped double-stranded DNA. This is Flap endonuclease 1 from Staphylothermus marinus (strain ATCC 43588 / DSM 3639 / JCM 9404 / F1).